A 242-amino-acid chain; its full sequence is ATP synthase subunit 4, mitochondrial (242 aa).

The transit peptide at 1–35 (MSFRALTMRSAVARTALNNTIRSARVATPYLGIRH) directs the protein to the mitochondrion.

This sequence belongs to the eukaryotic ATPase B chain family. As to quaternary structure, F-type ATPases have 2 components, CF(1) - the catalytic core - and CF(0) - the membrane proton channel. In yeast, the dimeric form of ATP synthase consists of 17 polypeptides: alpha, beta, gamma, delta, epsilon, 4 (B), 5 (OSCP), 6 (A), 8, 9 (C), d, E (Tim11), f, g, h, i/j and k.

It localises to the mitochondrion. Its subcellular location is the mitochondrion inner membrane. Mitochondrial membrane ATP synthase (F(1)F(0) ATP synthase or Complex V) produces ATP from ADP in the presence of a proton gradient across the membrane which is generated by electron transport complexes of the respiratory chain. F-type ATPases consist of two structural domains, F(1) - containing the extramembraneous catalytic core, and F(0) - containing the membrane proton channel, linked together by a central stalk and a peripheral stalk. During catalysis, ATP synthesis in the catalytic domain of F(1) is coupled via a rotary mechanism of the central stalk subunits to proton translocation. Part of the complex F(0) domain and the peripheric stalk, which acts as a stator to hold the catalytic alpha(3)beta(3) subcomplex and subunit a/ATP6 static relative to the rotary elements. In Candida glabrata (strain ATCC 2001 / BCRC 20586 / JCM 3761 / NBRC 0622 / NRRL Y-65 / CBS 138) (Yeast), this protein is ATP synthase subunit 4, mitochondrial (ATP4).